The following is a 298-amino-acid chain: Putative cysteine protease YopT-like blr2058 (298 aa).

Residues 1 to 14 (MYNRVDGEYAHTEQ) show a composition bias toward basic and acidic residues. Disordered stretches follow at residues 1 to 25 (MYNR…ADGS) and 59 to 80 (SDAI…SSSS). Residues 65–80 (SSNTSGLSTSSLSSSS) are compositionally biased toward low complexity. The active site involves C109. Residues 137–162 (NHRSAARRQEQSEKLKTQLKEDKAEG) are compositionally biased toward basic and acidic residues. Residues 137–166 (NHRSAARRQEQSEKLKTQLKEDKAEGSHNF) are disordered. Catalysis depends on residues H223 and D238.

This sequence belongs to the peptidase C58 family.

Functionally, potential cysteine protease, which may play a central role after invasion of host cell. This is Putative cysteine protease YopT-like blr2058 from Bradyrhizobium diazoefficiens (strain JCM 10833 / BCRC 13528 / IAM 13628 / NBRC 14792 / USDA 110).